The primary structure comprises 253 residues: Dof zinc finger protein DOF3.4 (253 aa).

The Dof-type zinc finger occupies 30–84 (LPCPRCDSSNTKFCYYNNYNFSQPRHFCKACRRYWTHGGTLRDVPVGGGTRKSAK). The Zn(2+) site is built by C32, C35, C57, and C60. The segment at 73-103 (VPVGGGTRKSAKRSRTCSNSSSSSVSGVVSN) is disordered. Positions 90–103 (SNSSSSSVSGVVSN) are enriched in low complexity.

Interacts with OBF4 or OBF5. Constitutively expressed in the whole plant.

The protein resides in the nucleus. In terms of biological role, transcription factor that binds specifically to a 5'-AA[AG]G-3' consensus core sequence. Enhances the DNA binding of OBF transcription factors to OCS elements. This is Dof zinc finger protein DOF3.4 (DOF3.4) from Arabidopsis thaliana (Mouse-ear cress).